The sequence spans 206 residues: N-(5'-phosphoribosyl)anthranilate isomerase (206 aa).

This sequence belongs to the TrpF family.

It carries out the reaction N-(5-phospho-beta-D-ribosyl)anthranilate = 1-(2-carboxyphenylamino)-1-deoxy-D-ribulose 5-phosphate. The protein operates within amino-acid biosynthesis; L-tryptophan biosynthesis; L-tryptophan from chorismate: step 3/5. This chain is N-(5'-phosphoribosyl)anthranilate isomerase, found in Pseudomonas syringae pv. syringae (strain B728a).